The chain runs to 536 residues: Phosphoenolpyruvate carboxykinase (ATP) (536 aa).

Substrate contacts are provided by Arg61, Tyr195, and Lys201. Residues Lys201, His220, and 236 to 244 (GLSGTGKTT) each bind ATP. The Mn(2+) site is built by Lys201 and His220. Asp257 serves as a coordination point for Mn(2+). ATP-binding residues include Glu285, Arg322, and Thr447. Arg322 lines the substrate pocket.

Belongs to the phosphoenolpyruvate carboxykinase (ATP) family. It depends on Mn(2+) as a cofactor.

Its subcellular location is the cytoplasm. It catalyses the reaction oxaloacetate + ATP = phosphoenolpyruvate + ADP + CO2. The protein operates within carbohydrate biosynthesis; gluconeogenesis. In terms of biological role, involved in the gluconeogenesis. Catalyzes the conversion of oxaloacetate (OAA) to phosphoenolpyruvate (PEP) through direct phosphoryl transfer between the nucleoside triphosphate and OAA. In Rhizobium johnstonii (strain DSM 114642 / LMG 32736 / 3841) (Rhizobium leguminosarum bv. viciae), this protein is Phosphoenolpyruvate carboxykinase (ATP).